Reading from the N-terminus, the 103-residue chain is Gene 56 protein (103 aa).

In terms of domain architecture, Glutaredoxin spans 9–103 (WDGAHVRTLF…DYYTASETGL (95 aa)).

The sequence is that of Gene 56 protein (56) from Mycobacterium phage L5 (Mycobacteriophage L5).